Here is a 74-residue protein sequence, read N- to C-terminus: uncharacterized protein (74 aa).

The helical transmembrane segment at 7–26 (IHLYVMASAMSSSPIFFFFQ) threads the bilayer.

Its subcellular location is the membrane. This is an uncharacterized protein from Homo sapiens (Human).